We begin with the raw amino-acid sequence, 558 residues long: MAYKSDIEIAREARKLPILEIGAKLGIAADELLPYGHDKAKVSQGFIDSVQDRADGRLILVTAINPTPAGEGKTTTTVGLGDGLNRIGKNAMICIREASLGPNFGMKGGAAGGGYAQIVPMEEMNLHFTGDFHAITSAHSLLSAMIDNHIYWGNEADIDTRRVVWRRVVDMNDRALRQITCSLGGVSNGFPREAGFDITVASEVMAILCLARDLKDLEKRLGDIIVAYRRDKSPVYCRDIKAEGAMTVLLKDAMQPNLVQTLENNPAFVHGGPFANIAHGCNSVIATKTALKVADYVVTEAGFGADLGAEKFMNIKCRKAGIAPSAVVLVATVRAMKMNGGVAKGDLGAENVAAVNKGCANLGRHIENVKSFGVPVVVAINHFVTDTDAEVQAVRDYCANHGVEAVLSRHWELGSEGSEALARKVVELAESGKANFAPIYPDDMSLFEKIETIAKRIYRADEVLADAKIRNQLKEWEEAGYRNLPVCMAKTQYSFTTDPNRRGAPTGHSVPVREVRLSAGAGFIVVVCGEIMTMPGLPRKPAAETIRLNDAGQIEGLF.

An ATP-binding site is contributed by 67–74; it reads TPAGEGKT.

This sequence belongs to the formate--tetrahydrofolate ligase family.

It carries out the reaction (6S)-5,6,7,8-tetrahydrofolate + formate + ATP = (6R)-10-formyltetrahydrofolate + ADP + phosphate. Its pathway is one-carbon metabolism; tetrahydrofolate interconversion. This is Formate--tetrahydrofolate ligase from Ruegeria pomeroyi (strain ATCC 700808 / DSM 15171 / DSS-3) (Silicibacter pomeroyi).